Consider the following 338-residue polypeptide: Ketol-acid reductoisomerase (NADP(+)) (338 aa).

Residues 1–181 enclose the KARI N-terminal Rossmann domain; sequence MQIFYDKDCD…GGGRTGIIET (181 aa). NADP(+) contacts are provided by residues 24–27, Arg47, Ser50, Ser52, and 82–85; these read YGSQ and DEFQ. The active site involves His107. Gly133 serves as a coordination point for NADP(+). Residues 182 to 327 enclose the KARI C-terminal knotted domain; that stretch reads SFREETETDL…SKLRAMMPWI (146 aa). Mg(2+) contacts are provided by Asp190, Glu194, Glu226, and Glu230. Ser251 contributes to the substrate binding site.

It belongs to the ketol-acid reductoisomerase family. It depends on Mg(2+) as a cofactor.

It catalyses the reaction (2R)-2,3-dihydroxy-3-methylbutanoate + NADP(+) = (2S)-2-acetolactate + NADPH + H(+). The enzyme catalyses (2R,3R)-2,3-dihydroxy-3-methylpentanoate + NADP(+) = (S)-2-ethyl-2-hydroxy-3-oxobutanoate + NADPH + H(+). The protein operates within amino-acid biosynthesis; L-isoleucine biosynthesis; L-isoleucine from 2-oxobutanoate: step 2/4. Its pathway is amino-acid biosynthesis; L-valine biosynthesis; L-valine from pyruvate: step 2/4. In terms of biological role, involved in the biosynthesis of branched-chain amino acids (BCAA). Catalyzes an alkyl-migration followed by a ketol-acid reduction of (S)-2-acetolactate (S2AL) to yield (R)-2,3-dihydroxy-isovalerate. In the isomerase reaction, S2AL is rearranged via a Mg-dependent methyl migration to produce 3-hydroxy-3-methyl-2-ketobutyrate (HMKB). In the reductase reaction, this 2-ketoacid undergoes a metal-dependent reduction by NADPH to yield (R)-2,3-dihydroxy-isovalerate. The sequence is that of Ketol-acid reductoisomerase (NADP(+)) from Acinetobacter baylyi (strain ATCC 33305 / BD413 / ADP1).